The following is a 536-amino-acid chain: 2-isopropylmalate synthase (536 aa).

The Pyruvate carboxyltransferase domain maps to 8-273 (VLIFDTTLRD…FFGKDSESPT (266 aa)). Residues Asp-17, His-208, His-210, and Asn-244 each contribute to the Mn(2+) site. Residues 408–536 (KLHLVQVSCG…PQHDVVKANL (129 aa)) form a regulatory domain region.

It belongs to the alpha-IPM synthase/homocitrate synthase family. LeuA type 1 subfamily. In terms of assembly, homodimer. It depends on Mn(2+) as a cofactor.

It is found in the cytoplasm. It catalyses the reaction 3-methyl-2-oxobutanoate + acetyl-CoA + H2O = (2S)-2-isopropylmalate + CoA + H(+). Its pathway is amino-acid biosynthesis; L-leucine biosynthesis; L-leucine from 3-methyl-2-oxobutanoate: step 1/4. Functionally, catalyzes the condensation of the acetyl group of acetyl-CoA with 3-methyl-2-oxobutanoate (2-ketoisovalerate) to form 3-carboxy-3-hydroxy-4-methylpentanoate (2-isopropylmalate). This Prochlorococcus marinus (strain SARG / CCMP1375 / SS120) protein is 2-isopropylmalate synthase.